The sequence spans 263 residues: uncharacterized protein (263 aa).

The protein belongs to the AtsA family.

Its subcellular location is the plastid. The protein localises to the chloroplast. This is an uncharacterized protein from Pyropia yezoensis (Susabi-nori).